Consider the following 422-residue polypeptide: Dihydrofolate synthase/folylpolyglutamate synthase (422 aa).

29–31 (DLG) is a binding site for 7,8-dihydropteroate. 59–62 (GKGT) provides a ligand contact to ATP. Serine 83 is a Mg(2+) binding site. Position 122 to 125 (122 to 125 (TYFE)) interacts with 7,8-dihydropteroate. Position 146 (glutamate 146) interacts with Mg(2+). 153–155 (LDA) is a binding site for 7,8-dihydropteroate. Histidine 173 provides a ligand contact to Mg(2+). N6-carboxylysine is present on lysine 188. The ATP site is built by asparagine 257, arginine 289, and aspartate 302.

The protein belongs to the folylpolyglutamate synthase family. As to quaternary structure, monomer. Requires Mg(2+) as cofactor.

It catalyses the reaction 7,8-dihydropteroate + L-glutamate + ATP = 7,8-dihydrofolate + ADP + phosphate + H(+). The catalysed reaction is (6S)-5,6,7,8-tetrahydrofolyl-(gamma-L-Glu)(n) + L-glutamate + ATP = (6S)-5,6,7,8-tetrahydrofolyl-(gamma-L-Glu)(n+1) + ADP + phosphate + H(+). The enzyme catalyses 10-formyltetrahydrofolyl-(gamma-L-Glu)(n) + L-glutamate + ATP = 10-formyltetrahydrofolyl-(gamma-L-Glu)(n+1) + ADP + phosphate + H(+). It carries out the reaction (6R)-5,10-methylenetetrahydrofolyl-(gamma-L-Glu)(n) + L-glutamate + ATP = (6R)-5,10-methylenetetrahydrofolyl-(gamma-L-Glu)(n+1) + ADP + phosphate + H(+). Its pathway is cofactor biosynthesis; tetrahydrofolate biosynthesis; 7,8-dihydrofolate from 2-amino-4-hydroxy-6-hydroxymethyl-7,8-dihydropteridine diphosphate and 4-aminobenzoate: step 2/2. It participates in cofactor biosynthesis; tetrahydrofolylpolyglutamate biosynthesis. In terms of biological role, functions in two distinct reactions of the de novo folate biosynthetic pathway. Catalyzes the addition of a glutamate residue to dihydropteroate (7,8-dihydropteroate or H2Pte) to form dihydrofolate (7,8-dihydrofolate monoglutamate or H2Pte-Glu). Also catalyzes successive additions of L-glutamate to tetrahydrofolate or 10-formyltetrahydrofolate or 5,10-methylenetetrahydrofolate, leading to folylpolyglutamate derivatives. This Escherichia coli (strain K12) protein is Dihydrofolate synthase/folylpolyglutamate synthase.